The primary structure comprises 573 residues: Multidrug and toxin extrusion protein 2 (573 aa).

The Cytoplasmic portion of the chain corresponds to Met1 to Ala46. The helical transmembrane segment at Leu47–Val67 threads the bilayer. At Ser68 to Asp81 the chain is on the extracellular side. A helical transmembrane segment spans residues Ala82–Ala102. The Cytoplasmic portion of the chain corresponds to Ser103 to Gly122. Residues Val123 to Phe143 form a helical membrane-spanning segment. The Extracellular segment spans residues Leu144–Arg161. Residues Leu162–Leu182 form a helical membrane-spanning segment. The Cytoplasmic portion of the chain corresponds to Gln183–Gln196. A helical membrane pass occupies residues Val197 to Ala217. Residues Leu218 to Ser225 are Extracellular-facing. A helical transmembrane segment spans residues Ala226 to Trp246. At Lys247–Ser266 the chain is on the cytoplasmic side. A helical transmembrane segment spans residues Ser267–Phe286. Residues Glu287–Gln304 lie on the Extracellular side of the membrane. Residues Ala305–Ala325 traverse the membrane as a helical segment. At Ser326 to Cys345 the chain is on the cytoplasmic side. A helical membrane pass occupies residues Thr346 to Leu366. Over Lys367–Asp379 the chain is Extracellular. Residues Ile380–Leu400 traverse the membrane as a helical segment. Residues Ala401–Lys415 lie on the Cytoplasmic side of the membrane. Residues Ile416 to Leu436 form a helical membrane-spanning segment. Over Met437–Gly443 the chain is Extracellular. A helical transmembrane segment spans residues Ile444–Ile464. At Tyr465–Leu545 the chain is on the cytoplasmic side. A helical transmembrane segment spans residues Val546–Val566. Topologically, residues Arg567–Gly573 are extracellular.

Belongs to the multi antimicrobial extrusion (MATE) (TC 2.A.66.1) family. As to expression, expressed in testis; especially in testicular Leydig cells.

The protein resides in the cell membrane. In terms of biological role, multidrug efflux pump that functions as a H(+)/organic cation antiporter. May mediate testosterone efflux from the Leydig cells in the testes. The chain is Multidrug and toxin extrusion protein 2 (Slc47a2) from Mus musculus (Mouse).